The chain runs to 445 residues: Exodeoxyribonuclease 7 large subunit (445 aa).

Belongs to the XseA family. As to quaternary structure, heterooligomer composed of large and small subunits.

The protein resides in the cytoplasm. The enzyme catalyses Exonucleolytic cleavage in either 5'- to 3'- or 3'- to 5'-direction to yield nucleoside 5'-phosphates.. In terms of biological role, bidirectionally degrades single-stranded DNA into large acid-insoluble oligonucleotides, which are then degraded further into small acid-soluble oligonucleotides. The polypeptide is Exodeoxyribonuclease 7 large subunit (Nautilia profundicola (strain ATCC BAA-1463 / DSM 18972 / AmH)).